The following is a 347-amino-acid chain: N-acetyl-gamma-glutamyl-phosphate reductase (347 aa).

Cys155 is an active-site residue.

This sequence belongs to the NAGSA dehydrogenase family. Type 1 subfamily.

Its subcellular location is the cytoplasm. The enzyme catalyses N-acetyl-L-glutamate 5-semialdehyde + phosphate + NADP(+) = N-acetyl-L-glutamyl 5-phosphate + NADPH + H(+). It functions in the pathway amino-acid biosynthesis; L-arginine biosynthesis; N(2)-acetyl-L-ornithine from L-glutamate: step 3/4. Catalyzes the NADPH-dependent reduction of N-acetyl-5-glutamyl phosphate to yield N-acetyl-L-glutamate 5-semialdehyde. This is N-acetyl-gamma-glutamyl-phosphate reductase from Akkermansia muciniphila (strain ATCC BAA-835 / DSM 22959 / JCM 33894 / BCRC 81048 / CCUG 64013 / CIP 107961 / Muc).